Reading from the N-terminus, the 144-residue chain is Snaclec coagulation factor IX/factor X-binding protein subunit B1 (144 aa).

The signal sequence occupies residues 1–23 (MGRFIFVSFGLLVVFLSLSGTAA). Cystine bridges form between C25/C36, C53/C142, and C119/C134. One can recognise a C-type lectin domain in the interval 32–143 (YEGHCYKPFN…CRMMANFVCE (112 aa)).

It belongs to the snaclec family. Heterodimer of subunits A and B1; disulfide-linked. Expressed by the venom gland.

It localises to the secreted. In terms of biological role, anticoagulant protein which binds to the gamma-carboxyglutamic acid-domain regions of factors IX (F9) and factor X (F10) in the presence of calcium with a 1 to 1 stoichiometry. The polypeptide is Snaclec coagulation factor IX/factor X-binding protein subunit B1 (Trimeresurus stejnegeri (Chinese green tree viper)).